Here is a 277-residue protein sequence, read N- to C-terminus: SF-assemblin (277 aa).

The segment at 1–20 (MATSGMVSPTSGRPFSPMRS) is disordered. Residues 1 to 27 (MATSGMVSPTSGRPFSPMRSSVLTTTG) are nonhelical region. The segment at 28-277 (SAIKLEHVSE…KMVNMQHNSA (250 aa)) is rod. A coiled-coil region spans residues 70–90 (RLEKSMEAEVKRRAESDKQLQ).

Belongs to the SF-assemblin family. In terms of processing, the N-terminus is blocked.

It localises to the cytoplasm. The protein resides in the cytoskeleton. Major component of the striated microtubule-associated fibers (SMAFs; system-I-fibers). This chain is SF-assemblin, found in Dunaliella bioculata (Green alga).